The following is a 295-amino-acid chain: Small ribosomal subunit protein uS2 (295 aa).

A disordered region spans residues 263–295 (KKFSKTKNIDEETNTEFEKALNDADENKNSDNA). The segment covering 278-295 (EFEKALNDADENKNSDNA) has biased composition (basic and acidic residues).

This sequence belongs to the universal ribosomal protein uS2 family.

The polypeptide is Small ribosomal subunit protein uS2 (Rickettsia peacockii (strain Rustic)).